Consider the following 268-residue polypeptide: 4-diphosphocytidyl-2-C-methyl-D-erythritol kinase (268 aa).

Lys10 is a catalytic residue. ATP is bound at residue Pro101–Thr111. Asp143 is a catalytic residue.

It belongs to the GHMP kinase family. IspE subfamily.

It carries out the reaction 4-CDP-2-C-methyl-D-erythritol + ATP = 4-CDP-2-C-methyl-D-erythritol 2-phosphate + ADP + H(+). It participates in isoprenoid biosynthesis; isopentenyl diphosphate biosynthesis via DXP pathway; isopentenyl diphosphate from 1-deoxy-D-xylulose 5-phosphate: step 3/6. In terms of biological role, catalyzes the phosphorylation of the position 2 hydroxy group of 4-diphosphocytidyl-2C-methyl-D-erythritol. The polypeptide is 4-diphosphocytidyl-2-C-methyl-D-erythritol kinase (Helicobacter pylori (strain ATCC 700392 / 26695) (Campylobacter pylori)).